A 659-amino-acid polypeptide reads, in one-letter code: Biosynthetic arginine decarboxylase 2 (659 aa).

Residue lysine 119 is modified to N6-(pyridoxal phosphate)lysine. 311 to 321 serves as a coordination point for substrate; it reads LNVGGGLAVDY.

The protein belongs to the Orn/Lys/Arg decarboxylase class-II family. SpeA subfamily. It depends on Mg(2+) as a cofactor. Requires pyridoxal 5'-phosphate as cofactor.

The catalysed reaction is L-arginine + H(+) = agmatine + CO2. In terms of biological role, catalyzes the biosynthesis of agmatine from arginine. The polypeptide is Biosynthetic arginine decarboxylase 2 (speA2) (Synechocystis sp. (strain ATCC 27184 / PCC 6803 / Kazusa)).